The following is a 210-amino-acid chain: Rho-related GTP-binding protein RhoD (210 aa).

24-31 is a binding site for GTP; that stretch reads GDGGCGKT. The Effector region signature appears at 46 to 54; it reads YTPTVFERY. Residues 71–75 and 129–132 each bind GTP; these read DTAGQ and CKTD. Position 207 is a cysteine methyl ester (Cys207). Cys207 is lipidated: S-geranylgeranyl cysteine. A propeptide spans 208 to 210 (removed in mature form); the sequence is VVT.

This sequence belongs to the small GTPase superfamily. Rho family. As to quaternary structure, interacts (in GTP-bound form) with DIAPH2 isoform 3, DAPK3, FILIP1 and WHAMM. Interacts with PAK5. Interacts (independent of GTP-loaded status) with ANKFY1. As to expression, heart, placenta, liver, skeletal muscle, and pancreas and, with weaker intensity, in several other tissues.

The protein resides in the cell membrane. The protein localises to the early endosome. Functionally, involved in endosome dynamics. May coordinate membrane transport with the function of the cytoskeleton. Involved in the internalization and trafficking of activated tyrosine kinase receptors such as PDGFRB. Participates in the reorganization of actin cytoskeleton; the function seems to involve WHAMM and includes regulation of filopodia formation and actin filament bundling. Can modulate the effect of DAPK3 in reorganization of actin cytoskeleton and focal adhesion dissolution. The protein is Rho-related GTP-binding protein RhoD of Homo sapiens (Human).